Consider the following 456-residue polypeptide: RUN domain-containing protein 3B (456 aa).

A disordered region spans residues 1 to 24 (MASRSLGGLSGIRGGGGGGGKKSL). Residues 8-21 (GLSGIRGGGGGGGK) show a composition bias toward gly residues. Residue Arg-13 is modified to Omega-N-methylarginine. The 133-residue stretch at 57–189 (DDSSPEFNNF…IDFSFCLKGE (133 aa)) folds into the RUN domain. Phosphoserine is present on residues Ser-215 and Ser-216. The segment at 216–237 (SDEEELRTLGSSGSESSTPENV) is disordered. Residues 224–235 (LGSSGSESSTPE) show a composition bias toward polar residues. The stretch at 300-325 (AHKLEKEQLEYIIVELQDQLTVLKNN) forms a coiled coil. Residues 382–405 (SLSQTSLDPGQSQEGDGKQDTLNV) show a composition bias toward polar residues. Residues 382–411 (SLSQTSLDPGQSQEGDGKQDTLNVMSEGKE) are disordered.

The protein belongs to the RUNDC3 family. As to quaternary structure, interacts with RAP2A.

The chain is RUN domain-containing protein 3B (RUNDC3B) from Pongo abelii (Sumatran orangutan).